The sequence spans 736 residues: Segment polarity protein dishevelled homolog DVL-2 (736 aa).

Positions 1–82 (MAETKVIYHL…RVVSWLASSE (82 aa)) constitute a DIX domain. The interval 79–241 (ASSEGSQPDS…PRLERTSSFS (163 aa)) is disordered. Pro residues predominate over residues 100–114 (EPPPPVPPPIPPPPA). The segment covering 149 to 160 (MRRDRVRRRESS) has biased composition (basic and acidic residues). Positions 181–195 (ESSSTLLTSEIETSI) are enriched in low complexity. The segment covering 205 to 217 (SRFSSSTEQSSAS) has biased composition (polar residues). The span at 219–231 (LLKRHRRRRKQRP) shows a compositional bias: basic residues. A PDZ domain is found at 254 to 326 (TVTLNMEKYN…NDDAVRVLRD (73 aa)). The interval 327–427 (IVHKPGPIVL…LASVVKVMAS (101 aa)) is interaction with custos. One can recognise a DEP domain in the interval 428–502 (PESGLEVRDR…SEQCYYIFGD (75 aa)). Composition is skewed to low complexity over residues 574-593 (MGSAGSQHSEGSRSSGSNRS) and 616-629 (KSGSGSESEYSTRS). The disordered stretch occupies residues 574–664 (MGSAGSQHSE…HPPSVHSYAA (91 aa)).

The protein belongs to the DSH family. Can form homomultimers. Interacts with prickle1. Interacts (via PDZ domain) with ccdc88c/dal and dact1-B/dpr. Interacts (via DIX domain) with ARP/Axin-related protein and dact1-A/frodo. Interacts with sdc4, possibly via fz7. Interacts directly (via DEP domain) with efnb1/ephrin-B1 and indirectly with the phosphorylated ephrin receptors ephb1 and ephb2, via association with SH domain-containing adapters. May interact with lrrc6. Interacts with custos (via NLS1 and NLS2); the interaction is negatively regulated by Wnt stimulation. Phosphorylated. Phosphorylation is controlled by frizzled proteins, correlates with the onset of embryo dorsalizing events and is higher in the dorsal half of early cleavage embryos. Phosphorylated on tyrosine residues in response to association with efnb1/ephrin-B1. In terms of tissue distribution, expressed equally in both animal-vegetal and dorsal-ventral directions of the early blastula. Becomes enriched on the dorsal side of the embryo after cortical rotation. Expressed along the anterior margin of eye field of neurulae (stage 16 embryos) and in the anterolateral crescent that borders the eye field. Continues to be expressed in the optic cup at stage 26. Expressed in the central nervous system throughout the early tailbud stage including the entire hindbrain.

It is found in the cytoplasm. The protein resides in the cytoplasmic vesicle. Its subcellular location is the cell projection. It localises to the cilium. The protein localises to the nucleus. It is found in the cell membrane. Involved in at least 2 independent signaling cascades, controlling cell fate via canonical Wnt signaling and cell polarity via a planar cell polarity (PCP) cascade. Acts synergistically with dal/dapple-like to activate Wnt signaling, stabilizing ctnnb1/beta-catenin and leading to dorsal axis formation. Also prevents degradation of ctnnb1/beta-catenin by displacing gsk3 from a complex with ARP/Axin-related protein. Has an additional role in anterior-posterior (A/P) axis formation, specifying different neuroectodermal cell fates along the A/P axis in a dose-dependent manner by activating several early patterning genes. In the PCP pathway, required at the cell membrane for PCP-mediated neural and mesodermal convergent extension during gastrulation and subsequent neural tube closure, acting to activate jnk. Also involved in blastopore closure and archenteron elongation during early, but not late, gastrulation. Associates with ephrin receptors and ligands and acts as part of a downstream PCP pathway to mediate ephrin-mediated cell repulsion via activation of rhoa. Required for efnb1/ephrin-B1-driven movement of non-retinal progenitor cells into the retina during eye field formation. Patterns the hindbrain. Required for ciliogenesis. Controls the docking of basal bodies to the apical plasma membrane; mediates the activation, but not localization of rhoa at the apical surface of ciliated cells during basal body docking. Furthermore, required for the association of basal bodies with membrane-bound vesicles and the vesicle-trafficking protein exoc4/sec8, and this association is in turn required for basal body docking. Once basal bodies are docked, required for the planar polarization of basal bodies that underlies ciliary beating and the directional fluid flow across ciliated epithelia. This is Segment polarity protein dishevelled homolog DVL-2 (dvl2) from Xenopus laevis (African clawed frog).